A 426-amino-acid polypeptide reads, in one-letter code: Lipase 7 (426 aa).

Positions 1–15 (MFVFLALITLTTCLQ) are cleaved as a signal peptide. Residues asparagine 74, asparagine 175, and asparagine 179 are each glycosylated (N-linked (GlcNAc...) asparagine). 2 cysteine pairs are disulfide-bonded: cysteine 108/cysteine 269 and cysteine 341/cysteine 385. The active-site Charge relay system is the serine 190. Asparagine 223 carries N-linked (GlcNAc...) asparagine glycosylation. The active-site Charge relay system is the histidine 358. N-linked (GlcNAc...) asparagine glycans are attached at residues asparagine 378, asparagine 379, asparagine 422, and asparagine 423.

Belongs to the AB hydrolase superfamily. Lipase family. Class Lip subfamily.

It carries out the reaction a triacylglycerol + H2O = a diacylglycerol + a fatty acid + H(+). Functionally, secreted lipase that is able to hydrolze both the neutral triacylglycerols and the monopalmitate ester Tween 40, allowing the use of hydrolyzed products as carbon sources. Has broad lipolytic activity, which may be important for colonization and subsequent infection, therefore contributing to the persistence and virulence in human tissue. The sequence is that of Lipase 7 from Candida albicans (strain SC5314 / ATCC MYA-2876) (Yeast).